The following is a 588-amino-acid chain: Adenine deaminase (588 aa).

It belongs to the metallo-dependent hydrolases superfamily. Adenine deaminase family. Homodimer. Mn(2+) is required as a cofactor.

It catalyses the reaction adenine + H2O + H(+) = hypoxanthine + NH4(+). In Escherichia coli (strain SMS-3-5 / SECEC), this protein is Adenine deaminase.